Consider the following 391-residue polypeptide: DNA replication and repair protein RecF (391 aa).

30–37 (GLNGQGKT) serves as a coordination point for ATP.

This sequence belongs to the RecF family.

The protein resides in the cytoplasm. The RecF protein is involved in DNA metabolism; it is required for DNA replication and normal SOS inducibility. RecF binds preferentially to single-stranded, linear DNA. It also seems to bind ATP. The sequence is that of DNA replication and repair protein RecF from Kineococcus radiotolerans (strain ATCC BAA-149 / DSM 14245 / SRS30216).